A 196-amino-acid chain; its full sequence is Phosphoheptose isomerase (196 aa).

One can recognise an SIS domain in the interval 34 to 196 (MVQCLLGGKK…DRTLFPQDEA (163 aa)). 49–51 (NGG) serves as a coordination point for substrate. Residues His-58 and Glu-62 each contribute to the Zn(2+) site. Substrate-binding positions include Glu-62, 91-92 (ND), 117-119 (STS), Ser-122, and Gln-172. The Zn(2+) site is built by Gln-172 and His-180.

It belongs to the SIS family. GmhA subfamily. Homotetramer. It depends on Zn(2+) as a cofactor.

The protein resides in the cytoplasm. The catalysed reaction is 2 D-sedoheptulose 7-phosphate = D-glycero-alpha-D-manno-heptose 7-phosphate + D-glycero-beta-D-manno-heptose 7-phosphate. The protein operates within carbohydrate biosynthesis; D-glycero-D-manno-heptose 7-phosphate biosynthesis; D-glycero-alpha-D-manno-heptose 7-phosphate and D-glycero-beta-D-manno-heptose 7-phosphate from sedoheptulose 7-phosphate: step 1/1. Functionally, catalyzes the isomerization of sedoheptulose 7-phosphate in D-glycero-D-manno-heptose 7-phosphate. This Shewanella denitrificans (strain OS217 / ATCC BAA-1090 / DSM 15013) protein is Phosphoheptose isomerase.